Here is a 287-residue protein sequence, read N- to C-terminus: ATP synthase gamma chain (287 aa).

This sequence belongs to the ATPase gamma chain family. In terms of assembly, F-type ATPases have 2 components, CF(1) - the catalytic core - and CF(0) - the membrane proton channel. CF(1) has five subunits: alpha(3), beta(3), gamma(1), delta(1), epsilon(1). CF(0) has three main subunits: a, b and c.

The protein localises to the cell membrane. In terms of biological role, produces ATP from ADP in the presence of a proton gradient across the membrane. The gamma chain is believed to be important in regulating ATPase activity and the flow of protons through the CF(0) complex. In Bacillus caldotenax, this protein is ATP synthase gamma chain.